A 154-amino-acid chain; its full sequence is Superoxide dismutase [Cu-Zn] (154 aa).

Lysine 19 is covalently cross-linked (Glycyl lysine isopeptide (Lys-Gly) (interchain with G-Cter in SUMO)). Residues serine 26 and serine 39 each carry the phosphoserine modification. Zn(2+) is bound at residue glutamate 43. 3 residues coordinate Cu cation: histidine 47, histidine 49, and histidine 64. Cysteine 58 and cysteine 147 are joined by a disulfide. Histidine 64 is a Zn(2+) binding site. Lysine 70 is covalently cross-linked (Glycyl lysine isopeptide (Lys-Gly) (interchain with G-Cter in SUMO)). Zn(2+)-binding residues include histidine 72, histidine 81, and aspartate 84. 2 positions are modified to phosphoserine: serine 99 and serine 117. Histidine 121 is a binding site for Cu cation. A phosphothreonine mark is found at threonine 132 and threonine 138. Residue arginine 144 participates in substrate binding.

It belongs to the Cu-Zn superoxide dismutase family. In terms of assembly, homodimer in holo form. In apo form, heterodimer with CCS1. Zinc-binding at 'His-16' of CCS1 and Glu-43 of apo-SOD1 is required for this heterodimerization. Cu cation serves as cofactor. Requires Zn(2+) as cofactor.

It localises to the cytoplasm. It is found in the mitochondrion intermembrane space. The catalysed reaction is 2 superoxide + 2 H(+) = H2O2 + O2. Its function is as follows. Destroys radicals which are normally produced within the cells and which are toxic to biological systems. This Saccharomyces cerevisiae (strain ATCC 204508 / S288c) (Baker's yeast) protein is Superoxide dismutase [Cu-Zn].